Reading from the N-terminus, the 398-residue chain is Probable aminomethyltransferase (398 aa).

This sequence belongs to the GcvT family. The glycine cleavage system is composed of four proteins: P, T, L and H.

It catalyses the reaction N(6)-[(R)-S(8)-aminomethyldihydrolipoyl]-L-lysyl-[protein] + (6S)-5,6,7,8-tetrahydrofolate = N(6)-[(R)-dihydrolipoyl]-L-lysyl-[protein] + (6R)-5,10-methylene-5,6,7,8-tetrahydrofolate + NH4(+). The glycine cleavage system catalyzes the degradation of glycine. In Thermococcus gammatolerans (strain DSM 15229 / JCM 11827 / EJ3), this protein is Probable aminomethyltransferase.